The chain runs to 432 residues: Adenylosuccinate synthetase (432 aa).

GTP is bound by residues 13–19 (GDEGKGK) and 41–43 (GHT). Asp-14 acts as the Proton acceptor in catalysis. Asp-14 and Gly-41 together coordinate Mg(2+). IMP is bound by residues 14–17 (DEGK), 39–42 (NAGH), Thr-130, Arg-144, Gln-225, Thr-240, and Arg-304. His-42 serves as the catalytic Proton donor. Residue 300–306 (ATTGRRR) coordinates substrate. GTP is bound by residues Arg-306, 332 to 334 (KLD), and 415 to 417 (STG).

It belongs to the adenylosuccinate synthetase family. Homodimer. Mg(2+) serves as cofactor.

Its subcellular location is the cytoplasm. The enzyme catalyses IMP + L-aspartate + GTP = N(6)-(1,2-dicarboxyethyl)-AMP + GDP + phosphate + 2 H(+). The protein operates within purine metabolism; AMP biosynthesis via de novo pathway; AMP from IMP: step 1/2. In terms of biological role, plays an important role in the de novo pathway of purine nucleotide biosynthesis. Catalyzes the first committed step in the biosynthesis of AMP from IMP. The polypeptide is Adenylosuccinate synthetase (Salmonella paratyphi A (strain AKU_12601)).